An 837-amino-acid polypeptide reads, in one-letter code: Neural cell adhesion molecule 2 (837 aa).

An N-terminal signal peptide occupies residues 1-19 (MSLLLSFYLLGLLVSSGQA). Residues 20-697 (LLQVTISLSK…PNIIKDTLFN (678 aa)) lie on the Extracellular side of the membrane. 5 consecutive Ig-like C2-type domains span residues 21 to 108 (LQVT…ATVV), 113 to 202 (QKLT…RDII), 208 to 297 (PPAI…AFLQ), 302 to 396 (PHII…MYLD), and 401 to 491 (PKFI…YILA). Cystine bridges form between C42-C93 and C136-C186. 2 N-linked (GlcNAc...) asparagine glycosylation sites follow: N177 and N219. C232 and C281 are oxidised to a cystine. A glycan (N-linked (GlcNAc...) asparagine) is linked at N309. C322 and C380 are joined by a disulfide. N406, N419, N445, N474, and N562 each carry an N-linked (GlcNAc...) asparagine glycan. C422 and C475 are joined by a disulfide. 2 Fibronectin type-III domains span residues 498–591 (SPYG…TLPV) and 593–688 (EPSP…PPKP). The helical transmembrane segment at 698-718 (GLGLGAVIGLGVAALLLILVV) threads the bilayer. The Cytoplasmic segment spans residues 719-837 (TDVSCFFIRQ…IQSKEDDSKA (119 aa)). Over residues 764-785 (GSKEPIVEMRTEDERVTNHEDG) the composition is skewed to basic and acidic residues. A disordered region spans residues 764 to 818 (GSKEPIVEMRTEDERVTNHEDGSPVNEPNETTPLTEPEKLPLKEEDGKEALNPET). S765 is modified (phosphoserine). T780 carries the post-translational modification Phosphothreonine. Position 786 is a phosphoserine (S786). Residues 789–798 (NEPNETTPLT) show a composition bias toward low complexity. A compositionally biased stretch (basic and acidic residues) spans 799–814 (EPEKLPLKEEDGKEAL).

As to expression, expressed most strongly in adult and fetal brain.

It localises to the cell membrane. Functionally, may play important roles in selective fasciculation and zone-to-zone projection of the primary olfactory axons. This Homo sapiens (Human) protein is Neural cell adhesion molecule 2 (NCAM2).